A 189-amino-acid polypeptide reads, in one-letter code: Segregation and condensation protein B (189 aa).

It belongs to the ScpB family. In terms of assembly, homodimer. Homodimerization may be required to stabilize the binding of ScpA to the Smc head domains. Component of a cohesin-like complex composed of ScpA, ScpB and the Smc homodimer, in which ScpA and ScpB bind to the head domain of Smc. The presence of the three proteins is required for the association of the complex with DNA.

It is found in the cytoplasm. Participates in chromosomal partition during cell division. May act via the formation of a condensin-like complex containing Smc and ScpA that pull DNA away from mid-cell into both cell halves. In Clostridium tetani (strain Massachusetts / E88), this protein is Segregation and condensation protein B.